Reading from the N-terminus, the 306-residue chain is Glutaminase (306 aa).

Substrate-binding residues include Ser64, Asn115, Glu159, Asn166, Tyr190, Tyr242, and Val260.

It belongs to the glutaminase family. As to quaternary structure, homotetramer.

The catalysed reaction is L-glutamine + H2O = L-glutamate + NH4(+). The chain is Glutaminase from Vibrio vulnificus (strain YJ016).